Here is an 86-residue protein sequence, read N- to C-terminus: Phosphocarrier protein HPr (86 aa).

Residues 1–86 (MVKKEAIIKA…LAELIESFKE (86 aa)) enclose the HPr domain. H15 functions as the Pros-phosphohistidine intermediate in the catalytic mechanism.

This sequence belongs to the HPr family.

Its subcellular location is the cytoplasm. General (non sugar-specific) component of the phosphoenolpyruvate-dependent sugar phosphotransferase system (sugar PTS). This major carbohydrate active-transport system catalyzes the phosphorylation of incoming sugar substrates concomitantly with their translocation across the cell membrane. The phosphoryl group from phosphoenolpyruvate (PEP) is transferred to the phosphoryl carrier protein HPr by enzyme I. Phospho-HPr then transfers it to the PTS EIIA domain. This Borreliella burgdorferi (strain ATCC 35210 / DSM 4680 / CIP 102532 / B31) (Borrelia burgdorferi) protein is Phosphocarrier protein HPr (ptsH).